A 119-amino-acid polypeptide reads, in one-letter code: Ribonuclease P protein component (119 aa).

It belongs to the RnpA family. As to quaternary structure, consists of a catalytic RNA component (M1 or rnpB) and a protein subunit.

The catalysed reaction is Endonucleolytic cleavage of RNA, removing 5'-extranucleotides from tRNA precursor.. RNaseP catalyzes the removal of the 5'-leader sequence from pre-tRNA to produce the mature 5'-terminus. It can also cleave other RNA substrates such as 4.5S RNA. The protein component plays an auxiliary but essential role in vivo by binding to the 5'-leader sequence and broadening the substrate specificity of the ribozyme. This Salmonella paratyphi A (strain AKU_12601) protein is Ribonuclease P protein component.